A 557-amino-acid polypeptide reads, in one-letter code: Transmembrane protein 209 (557 aa).

The chain crosses the membrane as a helical span at residues Val28–Thr48. Residue Asn57 is glycosylated (N-linked (GlcNAc...) asparagine). The helical transmembrane segment at Tyr60 to Phe80 threads the bilayer. Disordered stretches follow at residues Pro108 to Pro156 and Tyr194 to Glu232. Over residues Val125–Leu140 the composition is skewed to polar residues. 3 stretches are compositionally biased toward low complexity: residues Ser141–Pro156, Tyr194–Ser205, and Arg219–Pro228. Residues Asn273 and Asn343 are each glycosylated (N-linked (GlcNAc...) asparagine).

The protein localises to the membrane. It is found in the nucleus envelope. The protein resides in the golgi apparatus. It localises to the cytoplasm. The sequence is that of Transmembrane protein 209 (tmem209) from Xenopus tropicalis (Western clawed frog).